The primary structure comprises 494 residues: Cysteine--tRNA ligase (494 aa).

Cysteine 29 lines the Zn(2+) pocket. The 'HIGH' region signature appears at valine 31 to histidine 41. Residues cysteine 209, histidine 234, and glutamate 238 each contribute to the Zn(2+) site. The 'KMSKS' region signature appears at lysine 266 to serine 270. Lysine 269 contributes to the ATP binding site.

The protein belongs to the class-I aminoacyl-tRNA synthetase family. Monomer. Zn(2+) is required as a cofactor.

The protein resides in the cytoplasm. It carries out the reaction tRNA(Cys) + L-cysteine + ATP = L-cysteinyl-tRNA(Cys) + AMP + diphosphate. The protein is Cysteine--tRNA ligase of Geotalea uraniireducens (strain Rf4) (Geobacter uraniireducens).